Consider the following 95-residue polypeptide: Small ribosomal subunit protein bS18 (95 aa).

Belongs to the bacterial ribosomal protein bS18 family. As to quaternary structure, part of the 30S ribosomal subunit. Forms a tight heterodimer with protein bS6.

Binds as a heterodimer with protein bS6 to the central domain of the 16S rRNA, where it helps stabilize the platform of the 30S subunit. This Rickettsia akari (strain Hartford) protein is Small ribosomal subunit protein bS18.